Consider the following 403-residue polypeptide: Ribosomal RNA large subunit methyltransferase I (403 aa).

In terms of domain architecture, PUA spans 9 to 88; that stretch reads YPRLVLSKGR…EPVDIAFFTR (80 aa).

The protein belongs to the methyltransferase superfamily. RlmI family.

The protein resides in the cytoplasm. The catalysed reaction is cytidine(1962) in 23S rRNA + S-adenosyl-L-methionine = 5-methylcytidine(1962) in 23S rRNA + S-adenosyl-L-homocysteine + H(+). Its function is as follows. Specifically methylates the cytosine at position 1962 (m5C1962) of 23S rRNA. This chain is Ribosomal RNA large subunit methyltransferase I, found in Salmonella arizonae (strain ATCC BAA-731 / CDC346-86 / RSK2980).